The following is a 341-amino-acid chain: Tubulin beta chain (341 aa).

Positions 64, 68, 69, 70, 130, and 152 each coordinate GTP.

The protein belongs to the tubulin family. As to quaternary structure, dimer of alpha and beta chains. A typical microtubule is a hollow water-filled tube with an outer diameter of 25 nm and an inner diameter of 15 nM. Alpha-beta heterodimers associate head-to-tail to form protofilaments running lengthwise along the microtubule wall with the beta-tubulin subunit facing the microtubule plus end conferring a structural polarity. Microtubules usually have 13 protofilaments but different protofilament numbers can be found in some organisms and specialized cells. It depends on Mg(2+) as a cofactor.

Its subcellular location is the cytoplasm. The protein localises to the cytoskeleton. Its function is as follows. Tubulin is the major constituent of microtubules, a cylinder consisting of laterally associated linear protofilaments composed of alpha- and beta-tubulin heterodimers. Microtubules grow by the addition of GTP-tubulin dimers to the microtubule end, where a stabilizing cap forms. Below the cap, tubulin dimers are in GDP-bound state, owing to GTPase activity of alpha-tubulin. The sequence is that of Tubulin beta chain from Haliotis discus (Abalone).